The chain runs to 225 residues: ATP-dependent dethiobiotin synthetase BioD (225 aa).

12–17 (EVGKTY) is an ATP binding site. Position 16 (T16) interacts with Mg(2+). The active site involves K37. S41 is a substrate binding site. Residues D52, 114 to 117 (EGAG), and 174 to 175 (NC) each bind ATP. 2 residues coordinate Mg(2+): D52 and E114.

The protein belongs to the dethiobiotin synthetase family. In terms of assembly, homodimer. Requires Mg(2+) as cofactor.

Its subcellular location is the cytoplasm. It catalyses the reaction (7R,8S)-7,8-diammoniononanoate + CO2 + ATP = (4R,5S)-dethiobiotin + ADP + phosphate + 3 H(+). The protein operates within cofactor biosynthesis; biotin biosynthesis; biotin from 7,8-diaminononanoate: step 1/2. Catalyzes a mechanistically unusual reaction, the ATP-dependent insertion of CO2 between the N7 and N8 nitrogen atoms of 7,8-diaminopelargonic acid (DAPA, also called 7,8-diammoniononanoate) to form a ureido ring. This is ATP-dependent dethiobiotin synthetase BioD from Francisella tularensis subsp. mediasiatica (strain FSC147).